The primary structure comprises 407 residues: Aurora kinase A-A (407 aa).

Residues 1 to 10 (MERAVKENHK) are compositionally biased toward basic and acidic residues. The disordered stretch occupies residues 1-130 (MERAVKENHK…KTSAVPKEEG (130 aa)). 2 stretches are compositionally biased toward polar residues: residues 67–77 (ILSSQKPTTQI) and 84–110 (QGHQ…STPN). A Protein kinase domain is found at 140 to 390 (FEIGRPLGKG…LKGVLEHPWI (251 aa)). ATP is bound by residues lysine 150, lysine 169, and 217-220 (LDYA). The active-site Proton acceptor is aspartate 263. Residue aspartate 281 participates in ATP binding. The interval 287–300 (HAPSSRRTTLCGTL) is activation segment.

The protein belongs to the protein kinase superfamily. Ser/Thr protein kinase family. Aurora subfamily. In terms of assembly, interacts with kif2c and kif11. Post-translationally, phosphorylated. Autophosphorylated on a serine residue. In terms of tissue distribution, highly expressed in ovary and testis.

It localises to the cytoplasm. It is found in the cytoskeleton. The protein localises to the spindle. Its subcellular location is the microtubule organizing center. The protein resides in the centrosome. The enzyme catalyses L-seryl-[protein] + ATP = O-phospho-L-seryl-[protein] + ADP + H(+). It catalyses the reaction L-threonyl-[protein] + ATP = O-phospho-L-threonyl-[protein] + ADP + H(+). Mitotic serine/threonine kinases that contributes to the regulation of cell cycle progression. Associates with the centrosome and the spindle microtubules during mitosis and plays a critical role in various mitotic events including the establishment of mitotic spindle, centrosome duplication, centrosome separation as well as maturation, chromosomal alignment, spindle assembly checkpoint, and cytokinesis. Phosphorylates numerous target proteins. Important for microtubule formation and/or stabilization. This Xenopus laevis (African clawed frog) protein is Aurora kinase A-A (aurka-a).